The primary structure comprises 210 residues: Thymidylate kinase (210 aa).

11–18 (GVDGAGKT) is an ATP binding site.

It belongs to the thymidylate kinase family.

It catalyses the reaction dTMP + ATP = dTDP + ADP. Functionally, phosphorylation of dTMP to form dTDP in both de novo and salvage pathways of dTTP synthesis. The polypeptide is Thymidylate kinase (tmk) (Mycoplasma pneumoniae (strain ATCC 29342 / M129 / Subtype 1) (Mycoplasmoides pneumoniae)).